Here is a 77-residue protein sequence, read N- to C-terminus: Pollen allergen Amb p 5a (77 aa).

Residues 1 to 22 form the signal peptide; the sequence is MNNEKNVSFEFIGSTDEVDEIK. Disulfide bonds link cysteine 26–cysteine 61, cysteine 33–cysteine 48, cysteine 40–cysteine 54, and cysteine 41–cysteine 65.

The protein is Pollen allergen Amb p 5a of Ambrosia psilostachya (Western ragweed).